Here is a 66-residue protein sequence, read N- to C-terminus: DNA gyrase inhibitor YacG (66 aa).

Residues Cys9, Cys12, Cys28, and Cys32 each contribute to the Zn(2+) site. Residues His45–His66 form a disordered region.

This sequence belongs to the DNA gyrase inhibitor YacG family. As to quaternary structure, interacts with GyrB. Zn(2+) serves as cofactor.

Functionally, inhibits all the catalytic activities of DNA gyrase by preventing its interaction with DNA. Acts by binding directly to the C-terminal domain of GyrB, which probably disrupts DNA binding by the gyrase. The protein is DNA gyrase inhibitor YacG of Pseudomonas entomophila (strain L48).